The chain runs to 146 residues: UPF0260 protein VP2169 (146 aa).

This sequence belongs to the UPF0260 family.

The chain is UPF0260 protein VP2169 from Vibrio parahaemolyticus serotype O3:K6 (strain RIMD 2210633).